We begin with the raw amino-acid sequence, 174 residues long: uncharacterized protein (174 aa).

The helical transmembrane segment at 7–27 (LIILAIFTLWVGGFGYYLYLI) threads the bilayer.

The protein resides in the membrane. This is an uncharacterized protein from Rickettsia prowazekii (strain Madrid E).